A 48-amino-acid polypeptide reads, in one-letter code: Cytochrome c oxidase subunit 2 (48 aa).

At 1–14 the chain is on the mitochondrial intermembrane side; sequence MAHPAQLGLQDASS. A helical membrane pass occupies residues 15 to 45; the sequence is PIXEELLHFHEDALMIVFLISTLVLYIITTT. At 46–48 the chain is on the mitochondrial matrix side; that stretch reads VST.

This sequence belongs to the cytochrome c oxidase subunit 2 family. As to quaternary structure, component of the cytochrome c oxidase (complex IV, CIV), a multisubunit enzyme composed of 14 subunits. The complex is composed of a catalytic core of 3 subunits MT-CO1, MT-CO2 and MT-CO3, encoded in the mitochondrial DNA, and 11 supernumerary subunits COX4I, COX5A, COX5B, COX6A, COX6B, COX6C, COX7A, COX7B, COX7C, COX8 and NDUFA4, which are encoded in the nuclear genome. The complex exists as a monomer or a dimer and forms supercomplexes (SCs) in the inner mitochondrial membrane with NADH-ubiquinone oxidoreductase (complex I, CI) and ubiquinol-cytochrome c oxidoreductase (cytochrome b-c1 complex, complex III, CIII), resulting in different assemblies (supercomplex SCI(1)III(2)IV(1) and megacomplex MCI(2)III(2)IV(2)). Found in a complex with TMEM177, COA6, COX18, COX20, SCO1 and SCO2. Interacts with TMEM177 in a COX20-dependent manner. Interacts with COX20. Interacts with COX16. Requires Cu cation as cofactor.

The protein localises to the mitochondrion inner membrane. It carries out the reaction 4 Fe(II)-[cytochrome c] + O2 + 8 H(+)(in) = 4 Fe(III)-[cytochrome c] + 2 H2O + 4 H(+)(out). Its function is as follows. Component of the cytochrome c oxidase, the last enzyme in the mitochondrial electron transport chain which drives oxidative phosphorylation. The respiratory chain contains 3 multisubunit complexes succinate dehydrogenase (complex II, CII), ubiquinol-cytochrome c oxidoreductase (cytochrome b-c1 complex, complex III, CIII) and cytochrome c oxidase (complex IV, CIV), that cooperate to transfer electrons derived from NADH and succinate to molecular oxygen, creating an electrochemical gradient over the inner membrane that drives transmembrane transport and the ATP synthase. Cytochrome c oxidase is the component of the respiratory chain that catalyzes the reduction of oxygen to water. Electrons originating from reduced cytochrome c in the intermembrane space (IMS) are transferred via the dinuclear copper A center (CU(A)) of subunit 2 and heme A of subunit 1 to the active site in subunit 1, a binuclear center (BNC) formed by heme A3 and copper B (CU(B)). The BNC reduces molecular oxygen to 2 water molecules using 4 electrons from cytochrome c in the IMS and 4 protons from the mitochondrial matrix. The sequence is that of Cytochrome c oxidase subunit 2 (mt-co2) from Polypterus sp. (Bichir).